Consider the following 150-residue polypeptide: Large ribosomal subunit protein bL9 (150 aa).

Belongs to the bacterial ribosomal protein bL9 family.

Its function is as follows. Binds to the 23S rRNA. The protein is Large ribosomal subunit protein bL9 of Herminiimonas arsenicoxydans.